A 360-amino-acid polypeptide reads, in one-letter code: MWAPGHHHLCLIFLLTCVFACVFFLLIHQNLFHSGLDLFLPCPDRSRVRSPVAILCLSGTLMNPNATFTCPRHSASVSGTWTIDPKGRFGNQMGQYATLLALAQLNGRQAFIQPSMHAVLAPVFRITLPVLAPEVDRHAPWQELELHDWMSEEYAHLKEPWLKLTGFPCSWTFFHHLRDQIRSEFTLHEHLRQEAQRSLSGLRFPRTGGRPSTFVGVHVRRGDYLQVMPLHWKGVVGDRAYLQQAMDWFRARHKAPIFVVTSNGMKWCRENIDTSRGDVIFAGDGQEGAPNKDFALLTQCNHTIMTIGTFGFWAAYLAGGDTIYLANFTLPDSSFLKIFKPEAAFLPEWVGINADLSPLQ.

The Cytoplasmic segment spans residues 1–8 (MWAPGHHH). The chain crosses the membrane as a helical; Signal-anchor for type II membrane protein span at residues 9–27 (LCLIFLLTCVFACVFFLLI). The Lumenal portion of the chain corresponds to 28-360 (HQNLFHSGLD…GINADLSPLQ (333 aa)). N-linked (GlcNAc...) asparagine glycans are attached at residues asparagine 65, asparagine 301, and asparagine 327.

This sequence belongs to the glycosyltransferase 11 family. In terms of tissue distribution, expressed in brain, intestine and kidney.

The protein localises to the golgi apparatus. The protein resides in the golgi stack membrane. It carries out the reaction a ganglioside GM1 + GDP-beta-L-fucose = a ganglioside Fuc-GM1 + GDP + H(+). The catalysed reaction is a beta-D-galactosyl-(1-&gt;4)-N-acetyl-beta-D-glucosaminyl derivative + GDP-beta-L-fucose = an alpha-L-Fuc-(1-&gt;2)-beta-D-Gal-(1-&gt;4)-beta-D-GlcNAc derivative + GDP + H(+). It catalyses the reaction a ganglioside GA1 + GDP-beta-L-fucose = a ganglioside Fuc-GA1 + GDP + H(+). The enzyme catalyses a beta-D-Gal-(1-&gt;3)-beta-D-GlcNAc-(1-&gt;3)-beta-D-Gal-(1-&gt;4)-beta-D-Glc-(1&lt;-&gt;1')-Cer(d18:1(4E)) + GDP-beta-L-fucose = alpha-L-fucosyl-(1-&gt;2)- beta-D-galactosyl-(1-&gt;3)-N-acetyl-beta-D-glucosaminyl-(1-&gt;3)-beta-D-galactosyl-(1-&gt;4)-beta-D-glucosyl-(1&lt;-&gt;1')-N-acylsphing-4-enine + GDP + H(+). It carries out the reaction a neolactoside nLc4Cer(d18:1(4E)) + GDP-beta-L-fucose = a neolactoside IV(2)-alpha-Fuc-nLc4Cer(d18:1(4E)) + GDP + H(+). The catalysed reaction is beta-D-galactosyl-(1-&gt;3)-N-acetyl-D-galactosamine + GDP-beta-L-fucose = alpha-L-fucosyl-(1-&gt;2)-beta-D-galactosyl-(1-&gt;3)-N-acetyl-D-galactosamine + GDP + H(+). The protein operates within protein modification; protein glycosylation. Its function is as follows. Catalyzes the transfer of L-fucose, from a guanosine diphosphate-beta-L-fucose, to the terminal galactose residue of glycoconjugates through an alpha(1,2) linkage leading to H antigen synthesis that is an intermediate substrate in the synthesis of ABO blood group antigens. H antigen is essential for maturation of the glomerular layer of the main olfactory bulb, in cell migration and early cell-cell contacts during tumor associated angiogenesis. Preferentially fucosylates soluble lactose and to a lesser extent, fucosylates glycolipids gangliosides GA1 and GM1a. The polypeptide is Galactoside alpha-(1,2)-fucosyltransferase 1 (Bos taurus (Bovine)).